The sequence spans 160 residues: Arginine repressor (160 aa).

The protein belongs to the ArgR family.

The protein resides in the cytoplasm. It participates in amino-acid biosynthesis; L-arginine biosynthesis [regulation]. Its function is as follows. Regulates arginine biosynthesis genes. This chain is Arginine repressor, found in Anaeromyxobacter dehalogenans (strain 2CP-1 / ATCC BAA-258).